A 218-amino-acid chain; its full sequence is Small ribosomal subunit protein uS3c (218 aa).

Positions valine 47–alanine 118 constitute a KH type-2 domain.

Belongs to the universal ribosomal protein uS3 family. As to quaternary structure, part of the 30S ribosomal subunit.

It localises to the plastid. It is found in the chloroplast. This chain is Small ribosomal subunit protein uS3c (rps3), found in Calycanthus floridus var. glaucus (Eastern sweetshrub).